A 189-amino-acid chain; its full sequence is Fucolectin-5 (189 aa).

An N-terminal signal peptide occupies residues 1–31 (MKTCNLTDRMKVKMIMLLFQILAISTLQSDS). The F5/8 type C-like stretch occupies residues 40 to 189 (QENVAVRGKA…VEVNALLPAN (150 aa)). Aspartate 70, asparagine 72, and serine 81 together coordinate Ca(2+). Disulfide bonds link cysteine 82/cysteine 178, cysteine 114/cysteine 115, and cysteine 140/cysteine 156. The alpha-L-fucose site is built by histidine 84 and arginine 111. A Cell attachment site motif is present at residues 111–113 (RGD). Alpha-L-fucose is bound at residue arginine 118. The Ca(2+) site is built by cysteine 178 and glutamate 179.

This sequence belongs to the fucolectin family. As to quaternary structure, homotrimer. In terms of tissue distribution, gill mucous cells.

The protein localises to the secreted. In terms of biological role, acts as a defensive agent. Recognizes blood group fucosylated oligosaccharides including A, B, H and Lewis B-type antigens. Does not recognize Lewis A antigen and has low affinity for monovalent haptens. The polypeptide is Fucolectin-5 (Anguilla japonica (Japanese eel)).